Reading from the N-terminus, the 246-residue chain is RVRARIPGLSSPEGEFPEDFEPRELPPFGAPAPTEPACPEEEEHIRAPSGHHQAGHCLMWACKACKRKSTTMDRRKAATMRERRRLKKVNQAFETLKRCTTANPNQRLPKVEILRNAIRYIESLQELLREQVENYYHLPGQSCSEPTSPSSSCSDAMGRTAAGPVWPARGSSFEAGYCPEMPHAYATEQSGALSSLDCLSRIVDRLSPAEEPGLPLRHAGSLSPGASIDSGARTPGSPPPRTYQAL.

Residues 1-38 form a disordered region; the sequence is RVRARIPGLSSPEGEFPEDFEPRELPPFGAPAPTEPAC. The bHLH domain maps to 73 to 124; the sequence is DRRKAATMRERRRLKKVNQAFETLKRCTTANPNQRLPKVEILRNAIRYIESL. The disordered stretch occupies residues 210–246; sequence EEPGLPLRHAGSLSPGASIDSGARTPGSPPPRTYQAL. The span at 236 to 246 shows a compositional bias: pro residues; sequence GSPPPRTYQAL.

Efficient DNA binding requires dimerization with another bHLH protein.

It localises to the nucleus. In terms of biological role, acts as a transcriptional activator that promotes transcription of muscle-specific target genes and plays a role in muscle differentiation. Induces fibroblasts to differentiate into myoblasts. Probable sequence specific DNA-binding protein. The chain is Myogenic factor 5 (MYF5) from Coturnix japonica (Japanese quail).